The following is a 413-amino-acid chain: Alpha-1-antiproteinase (413 aa).

An N-terminal signal peptide occupies residues 1–24 (MTPSISWRLLLLAGLCCLVPSYLA). Ser-33 carries the phosphoserine modification. N-linked (GlcNAc...) asparagine glycans are attached at residues Asn-64, Asn-101, and Asn-265. The tract at residues 368 to 387 (ATTIVEAVFMSLPPILHFNH) is RCL. Ser-378 bears the Phosphoserine mark.

The protein belongs to the serpin family. As to quaternary structure, interacts with CELA2A. Interacts with ERGIC3 and LMAN1/ERGIC53. Interacts with PRSS1/Trypsin.

The protein resides in the secreted. Functionally, inhibitor of serine proteases. The primary target is elastase, but also has a moderate affinity for plasmin and thrombin. This chain is Alpha-1-antiproteinase (Serpina1), found in Mus saxicola (Brown spiny mouse).